The primary structure comprises 331 residues: 2-hydroxyacid dehydrogenase homolog (331 aa).

NAD(+) is bound by residues 154–155 (HI), 234–236 (TSR), and Asp260. The active site involves Arg236. Residue Glu265 is part of the active site. The active-site Proton donor is the His297. 297 to 300 (HQAF) lines the NAD(+) pocket.

This sequence belongs to the D-isomer specific 2-hydroxyacid dehydrogenase family.

The sequence is that of 2-hydroxyacid dehydrogenase homolog (ddh) from Zymomonas mobilis subsp. mobilis (strain ATCC 31821 / ZM4 / CP4).